Reading from the N-terminus, the 778-residue chain is MSFVIAVPEALTMAASDLANIGSTINAANAAAALPTTGVVAAAADEVSAAVAALFGSYAQSYQAFGAQLSAFHAQFVQSLTNGARSYVVAEATSAAPLQDLLGVVNAPAQALLGRPLIGNGANGADGTGAPGGPGGLLLGNGGNGGSGAPGQPGGAGGDAGLIGNGGTGGKGGDGLVGSGAAGGVGGRGGWLLGNGGTGGAGGAAGATLVGGTGGVGGATGLIGSGGFGGAGGAAAGVGTTGGVGGSGGVGGVFGNGGFGGAGGLGAAGGVGGAASYFGTGGGGGVGGDGAPGGDGGAGPLLIGNGGVGGLGGAGAAGGNGGAGGMLLGDGGAGGQGGPAVAGVLGGMPGAGGNGGNANWFGSGGAGGQGGTGLAGTNGVNPGSIANPNTGANGTDNSGNGNQTGGNGGPGPAGGVGEAGGVGGQGGLGESLDGNDGTGGKGGAGGTAGTDGGAGGAGGAGGIGETDGSAGGVATGGEGGDGATGGVDGGVGGAGGKGGQGHNTGVGDAFGGDGGIGGDGNGALGAAGGNGGTGGAGGNGGRGGMLIGNGGAGGAGGTGGTGGGGAAGFAGGVGGAGGEGLTDGAGTAEGGTGGLGGLGGVGGTGGMGGSGGVGGNGGAAGSLIGLGGGGGAGGVGGTGGIGGIGGAGGNGGAGGAGTTTGGGATIGGGGGTGGVGGAGGTGGTGGAGGTTGGSGGAGGLIGWAGAAGGTGAGGTGGQGGLGGQGGNGGNGGTGATGGQGGDFALGGNGGAGGAGGSPGGSSGIQGNMGPPGTQGADG.

Residues 1-92 (MSFVIAVPEA…GARSYVVAEA (92 aa)) enclose the PE domain. Disordered stretches follow at residues 125–163 (ADGTGAPGGPGGLLLGNGGNGGSGAPGQPGGAGGDAGLI), 372–510 (TGLA…GDAF), and 718–778 (QGGL…GADG). Composition is skewed to gly residues over residues 402–429 (NQTGGNGGPGPAGGVGEAGGVGGQGGLG), 436–510 (DGTG…GDAF), and 718–763 (QGGL…GSSG).

Belongs to the mycobacterial PE family. PGRS subfamily.

This is an uncharacterized protein from Mycobacterium bovis (strain ATCC BAA-935 / AF2122/97).